Reading from the N-terminus, the 1588-residue chain is Centrosomal protein of 170 kDa (1588 aa).

Residues 23–73 (IFVGRDDCELMLQSRSVDKQHAVINYDASMDEHLVKDLGSLNGTFVNDVRI) form the FHA domain. Disordered regions lie at residues 121-172 (LSQK…MPRG), 299-323 (KFTS…GIQT), 338-447 (QNNP…EEPS), and 461-508 (SGSL…NPNS). Residue serine 141 is modified to Phosphoserine. Residues 155–164 (EALKSEEKPM) are compositionally biased toward basic and acidic residues. A compositionally biased stretch (basic and acidic residues) spans 347–357 (ERTEEDSKSIK). Phosphoserine occurs at positions 355 and 358. Tyrosine 363 is modified (phosphotyrosine). Over residues 407–418 (KKKAQSTEKHQE) the composition is skewed to basic and acidic residues. Serine 443, serine 463, and serine 494 each carry phosphoserine. Threonine 498 is modified (phosphothreonine). 4 positions are modified to phosphoserine: serine 568, serine 577, serine 628, and serine 631. Residues 602 to 854 (ELSATVENET…PHINKQNSSV (253 aa)) are disordered. Polar residues predominate over residues 620–631 (LRSTSCTTSLAS). A Phosphothreonine modification is found at threonine 639. Residues 645 to 654 (NEEKLLESSR) show a composition bias toward basic and acidic residues. At serine 662 the chain carries Phosphoserine. Residues 663 to 691 (EIGEKQDTELQEKEAQVYQSEKHDADRGL) are compositionally biased toward basic and acidic residues. Residue serine 718 is modified to Phosphoserine. Residues 720-731 (SKEKSETEKETS) are compositionally biased toward basic and acidic residues. The residue at position 752 (threonine 752) is a Phosphothreonine. 2 stretches are compositionally biased toward basic and acidic residues: residues 764 to 774 (HIDKCREESSK) and 789 to 821 (SKGD…KESS). The span at 822–839 (KSLVRQGSFTIDKPSSNI) shows a compositional bias: polar residues. Serine 829, serine 870, and serine 872 each carry phosphoserine. The tract at residues 844 to 1588 (IPHINKQNSS…GEEEDVTVHE (745 aa)) is targeting to microtubules. Positions 899–908 (LREDNNKTDE) are enriched in basic and acidic residues. Disordered regions lie at residues 899–1222 (LRED…RWRR) and 1228–1247 (ASTS…HTRL). Phosphothreonine is present on residues threonine 906 and threonine 912. Residues 913–937 (PSYNRDNSISPESDVDTASTISLVT) show a composition bias toward polar residues. Serine 922, serine 925, and serine 950 each carry phosphoserine. Positions 967 to 980 (DVTKSGSREKIEKK) are enriched in basic and acidic residues. Serine 1008 bears the Phosphoserine mark. Threonine 1012 bears the Phosphothreonine mark. The span at 1028-1038 (IMSSDQETYSC) shows a compositional bias: polar residues. Threonine 1047 bears the Phosphothreonine mark. Serine 1048 is modified (phosphoserine). Over residues 1049–1062 (ADEHNIHSKLEGGK) the composition is skewed to basic and acidic residues. Positions 1075–1093 (STSKSTTLPRPRPTRTSLL) are enriched in low complexity. Residues serine 1102, serine 1104, serine 1122, serine 1123, serine 1135, serine 1150, and serine 1155 each carry the phosphoserine modification. A targeting to centrosomes region spans residues 1103–1588 (DSELADADKA…GEEEDVTVHE (486 aa)). Over residues 1112–1128 (ASVASEVSTTSSTSKPP) the composition is skewed to low complexity. Residues 1158–1173 (EATISRSSASARTAEA) are compositionally biased toward low complexity. Residues serine 1188, serine 1195, serine 1200, serine 1229, serine 1231, serine 1241, serine 1260, and serine 1270 each carry the phosphoserine modification. Residues 1191-1218 (TRANSISRLSDSKVKSMSSTHGSPSVNS) are compositionally biased toward polar residues. The segment at 1315 to 1334 (SVTSSGTAPSTTVSTAATTP) is disordered. Serine 1362 carries the phosphoserine modification. Residues 1370-1398 (PLVHSKTPEGNNGRSVDSRPQPAEHPDHL) form a disordered region. Residues 1467–1495 (KTSSMEISSILQELKRVEKQLQVINAMID) are a coiled coil. The disordered stretch occupies residues 1511 to 1540 (AILPSPPKQKSSPVNNHSSPSQTPALCPPE). The segment covering 1518–1534 (KQKSSPVNNHSSPSQTP) has biased composition (polar residues). Serine 1521 and serine 1522 each carry phosphoserine.

The protein belongs to the CEP170 family. Interacts with CCDC68 and CCDC120; leading to recruitment to centrosomes. Interacts with PLK1. Interacts with NIN. Interacts with FHDC1. Interacts with CCDC61. Interacts with TBK1; efficient complex formation may be dependent on the presence of CCDC61. In terms of processing, phosphorylated; probably by PLK1.

It localises to the cytoplasm. The protein localises to the cytoskeleton. It is found in the microtubule organizing center. Its subcellular location is the centrosome. The protein resides in the centriole. It localises to the spindle. Functionally, plays a role in microtubule organization. Required for centriole subdistal appendage assembly. The chain is Centrosomal protein of 170 kDa (Cep170) from Mus musculus (Mouse).